A 704-amino-acid polypeptide reads, in one-letter code: Ion-translocating oxidoreductase complex subunit C (704 aa).

2 consecutive 4Fe-4S ferredoxin-type domains span residues 368 to 397 and 407 to 436; these read MGAPQEEKSCIRCSACADACPADLLPQQLY and KATAHHIADCIECGACAWVCPSNIPLVQYF. 8 residues coordinate [4Fe-4S] cluster: cysteine 377, cysteine 380, cysteine 383, cysteine 387, cysteine 416, cysteine 419, cysteine 422, and cysteine 426. Residues 536–685 form a disordered region; sequence RAKQAAHPMA…ADPRKAAVAA (150 aa). A compositionally biased stretch (low complexity) spans 556 to 565; that stretch reads KAAVEAAIAR.

It belongs to the 4Fe4S bacterial-type ferredoxin family. RnfC subfamily. As to quaternary structure, the complex is composed of six subunits: RsxA, RsxB, RsxC, RsxD, RsxE and RsxG. Requires [4Fe-4S] cluster as cofactor.

It localises to the cell inner membrane. Part of a membrane-bound complex that couples electron transfer with translocation of ions across the membrane. Required to maintain the reduced state of SoxR. This chain is Ion-translocating oxidoreductase complex subunit C, found in Salmonella dublin (strain CT_02021853).